We begin with the raw amino-acid sequence, 895 residues long: Androgen receptor (895 aa).

Positions 1 to 533 are modulating; it reads MEVQLGLGRV…PIDYYFPPQK (533 aa). Positions 1 to 562 are interaction with ZNF318; the sequence is MEVQLGLGRV…GSCKVFFKRA (562 aa). Disordered stretches follow at residues 33–150 and 175–211; these read VIQN…LSLL and QLLQ…YLGG. Composition is skewed to low complexity over residues 44–81 and 175–200; these read AASA…GSPQ and QLLQ…ASGA. S65 carries the phosphoserine; by CDK9 modification. Position 79 is a phosphoserine (S79). Positions 201-211 are enriched in polar residues; the sequence is PTSSKDNYLGG. Y208 is subject to Phosphotyrosine; by CSK. At S241 the chain carries Phosphoserine. Position 252 is a phosphotyrosine; by CSK and TNK2 (Y252). Phosphotyrosine; by CSK is present on residues Y292, Y331, Y342, and Y347. Y348 carries the phosphotyrosine; by CSK and TNK2 modification. K371 is covalently cross-linked (Glycyl lysine isopeptide (Lys-Gly) (interchain with G-Cter in SUMO)). At Y378 the chain carries Phosphotyrosine; by CSK. Residue K496 forms a Glycyl lysine isopeptide (Lys-Gly) (interchain with G-Cter in SUMO) linkage. Y510 and Y527 each carry phosphotyrosine; by CSK. An interaction with LPXN region spans residues 527–894; sequence YYFPPQKTCL…GKVKPIYFHT (368 aa). A DNA-binding region (nuclear receptor) is located at residues 534–607; sequence TCLICGDEAS…AGMTLGARKL (74 aa). NR C4-type zinc fingers lie at residues 535 to 555 and 571 to 595; these read CLIC…CGSC and CASR…LRKC. Residues 547 to 637 form an interaction with HIPK3 region; the sequence is YGALTCGSCK…TEETAQKLTV (91 aa). The interval 567 to 894 is interaction with CCAR1; that stretch reads QKYLCASRND…GKVKPIYFHT (328 aa). The interval 600–894 is interaction with KAT7; that stretch reads MTLGARKLKK…GKVKPIYFHT (295 aa). S626 bears the Phosphoserine; by STK4/MST1 mark. The 232-residue stretch at 644–875 folds into the NR LBD domain; it reads ECQPIFLNVL…DFPEMMAEII (232 aa). 2 residues coordinate 17beta-hydroxy-5alpha-androstan-3-one: N681 and R728. Glycyl lysine isopeptide (Lys-Gly) (interchain with G-Cter in ubiquitin) cross-links involve residues K821 and K823. T853 is a binding site for 17beta-hydroxy-5alpha-androstan-3-one. Y891 is subject to Phosphotyrosine; by CSK.

The protein belongs to the nuclear hormone receptor family. NR3 subfamily. In terms of assembly, binds DNA as a homodimer. Part of a ternary complex containing AR, EFCAB6/DJBP and PARK7. Interacts with HIPK3 and NR0B2 in the presence of androgen. The ligand binding domain interacts with KAT7/HBO1 in the presence of dihydrotestosterone. Interacts with EFCAB6/DJBP, PQBP1, RANBP9, RBAK, SPDEF, SRA1, TGFB1I1 and RREB1. Interacts with ZMIZ1/ZIMP10 and ZMIZ2/ZMIP7 which both enhance its transactivation activity. Interacts with SLC30A9 and RAD54L2/ARIP4. Interacts with MACROD1 (via macro domain). Interacts via the ligand-binding domain with LXXLL and FXXLF motifs from NCOA1, NCOA2, NCOA3 and MAGEA11. Interacts (via nuclear receptor DNA binding domain and nuclear receptor ligand binding domain) with NCOA4. The AR N-terminal poly-Gln region binds Ran resulting in enhancement of AR-mediated transactivation. Ran-binding decreases as the poly-Gln length increases. Interacts with HIP1 (via coiled coil domain). Interacts (via ligand-binding domain) with TRIM68. Interacts with TNK2. Interacts with USP26. Interacts with RNF6. Interacts (regulated by RNF6 probably through polyubiquitination) with RNF14; regulates AR transcriptional activity. Interacts with PRMT2 and TRIM24. Interacts with RACK1. Interacts with RANBP10; this interaction enhances dihydrotestosterone-induced AR transcriptional activity. Interacts with PRPF6 in a hormone-independent way; this interaction enhances dihydrotestosterone-induced AR transcriptional activity. Interacts with STK4/MST1. Interacts with ZIPK/DAPK3. Interacts with LPXN. Interacts with MAK. Part of a complex containing AR, MAK and NCOA3. Interacts with CRY1. Interacts with CCAR1 and GATA2. Interacts with ZNF318. Interacts with BUD31. Interacts with ARID4A. Interacts with ARID4B. Interacts (via NR LBD domain) with ZBTB7A; the interaction is direct and androgen-dependent. Interacts with NCOR1. Interacts with NCOR2. Interacts with CRY2 in a ligand-dependent manner. In terms of processing, phosphorylated in prostate cancer cells in response to several growth factors including EGF. Phosphorylation is induced by c-Src kinase (CSK). Tyr-510 is one of the major phosphorylation sites and an increase in phosphorylation and Src kinase activity is associated with prostate cancer progression. Phosphorylation by TNK2 enhances the DNA-binding and transcriptional activity. Phosphorylation at Ser-65 by CDK9 regulates AR promoter selectivity and cell growth. Post-translationally, sumoylated on Lys-371 (major) and Lys-496. Ubiquitinated. Deubiquitinated by USP26. 'Lys-6' and 'Lys-27'-linked polyubiquitination by RNF6 modulates AR transcriptional activity and specificity. Palmitoylated by ZDHHC7 and ZDHHC21. Palmitoylation is required for plasma membrane targeting and for rapid intracellular signaling via ERK and AKT kinases and cAMP generation.

It localises to the nucleus. Its subcellular location is the cytoplasm. Functionally, steroid hormone receptors are ligand-activated transcription factors that regulate eukaryotic gene expression and affect cellular proliferation and differentiation in target tissues. Transcription factor activity is modulated by bound coactivator and corepressor proteins like ZBTB7A that recruits NCOR1 and NCOR2 to the androgen response elements/ARE on target genes, negatively regulating androgen receptor signaling and androgen-induced cell proliferation. Transcription activation is also down-regulated by NR0B2. Activated, but not phosphorylated, by HIPK3 and ZIPK/DAPK3. This chain is Androgen receptor (AR), found in Macaca fascicularis (Crab-eating macaque).